A 304-amino-acid chain; its full sequence is Nod factor export ATP-binding protein I (304 aa).

The 231-residue stretch at 6–236 (IDLAGVKKSF…HIGCQVIEIF (231 aa)) folds into the ABC transporter domain. 38–45 (GPNGAGKS) serves as a coordination point for ATP.

Belongs to the ABC transporter superfamily. Lipooligosaccharide exporter (TC 3.A.1.102) family. The complex is composed of two ATP-binding proteins (NodI) and two transmembrane proteins (NodJ).

It localises to the cell inner membrane. Functionally, part of the ABC transporter complex NodIJ involved in the export of the nodulation factors (Nod factors), the bacterial signal molecules that induce symbiosis and subsequent nodulation induction. Nod factors are LCO (lipo-chitin oligosaccharide), a modified beta-1,4-linked N-acetylglucosamine oligosaccharide. This subunit is responsible for energy coupling to the transport system. The chain is Nod factor export ATP-binding protein I from Rhizobium sp. (strain N33).